The sequence spans 409 residues: F-box protein At3g17320 (409 aa).

The F-box domain occupies 1–47 (MTKISDLPRDLAEEVLSRVPVTYLRAIRFTCKKWNTLTKRRSFTKKL).

The sequence is that of F-box protein At3g17320 from Arabidopsis thaliana (Mouse-ear cress).